Consider the following 231-residue polypeptide: Ribosome maturation factor RimM (231 aa).

A disordered region spans residues 1–29; the sequence is MSERDSGSSGRAKAKRQPGAKAPFGPFVR. A PRC barrel domain is found at 150–231; that stretch reads TDEYYWVDLV…KIIVDWEADY (82 aa).

The protein belongs to the RimM family. As to quaternary structure, binds ribosomal protein uS19.

It localises to the cytoplasm. An accessory protein needed during the final step in the assembly of 30S ribosomal subunit, possibly for assembly of the head region. Essential for efficient processing of 16S rRNA. May be needed both before and after RbfA during the maturation of 16S rRNA. It has affinity for free ribosomal 30S subunits but not for 70S ribosomes. This chain is Ribosome maturation factor RimM, found in Paraburkholderia phymatum (strain DSM 17167 / CIP 108236 / LMG 21445 / STM815) (Burkholderia phymatum).